The following is an 89-amino-acid chain: MSLDTTEKQQLINSHQTHATDTGSAEVQVAMLSERISKLSSHLQQNIHDYSSRQGLLKMIGRRKRLLGYVRGKSEQRYSDLISKLGIRG.

The interval 1–24 (MSLDTTEKQQLINSHQTHATDTGS) is disordered. The span at 8 to 24 (KQQLINSHQTHATDTGS) shows a compositional bias: polar residues.

It belongs to the universal ribosomal protein uS15 family. In terms of assembly, part of the 30S ribosomal subunit. Forms a bridge to the 50S subunit in the 70S ribosome, contacting the 23S rRNA.

In terms of biological role, one of the primary rRNA binding proteins, it binds directly to 16S rRNA where it helps nucleate assembly of the platform of the 30S subunit by binding and bridging several RNA helices of the 16S rRNA. Forms an intersubunit bridge (bridge B4) with the 23S rRNA of the 50S subunit in the ribosome. The polypeptide is Small ribosomal subunit protein uS15 (Synechococcus sp. (strain CC9311)).